The following is a 474-amino-acid chain: MRLSKTLVDMDMADYSAALDPAYTTLEFENVQVLTMGNDTSPSEGTNLNAPNSLGVSALCAICGDRATGKHYGASSCDGCKGFFRRSVRKNHMYSCRFSRQCVVDKDKRNQCRYCRLKKCFRAGMKKEAVQNERDRISTRRSSYEDSSLPSINALLQAEVLSRQITSPVSGINGDIRAKKIASIADVCESMKEQLLVLVEWAKYIPAFCELPLDDQVALLRAHAGEHLLLGATKRSMVFKDVLLLGNDYIVPRHCPELAEMSRVSIRILDELVLPFQELQIDDNEYAYLKAIIFFDPDAKGLSDPGKIKRLRSQVQVSLEDYINDRQYDSRGRFGELLLLLPTLQSITWQMIEQIQFIKLFGMAKIDNLLQEMLLGGSPSDAPHAHHPLHPHLMQEHMGTNVIVANTMPTHLSNGQMCEWPRPRGQAATPETPQPSPPGGSGSEPYKLLPGAVATIVKPLSAIPQPTITKQEVI.

Residues 57–132 (SALCAICGDR…AGMKKEAVQN (76 aa)) constitute a DNA-binding region (nuclear receptor). NR C4-type zinc fingers lie at residues 60–80 (CAICGDRATGKHYGASSCDGC) and 96–120 (CRFSRQCVVDKDKRNQCRYCRLKKC). A phosphoserine mark is found at Ser142 and Ser143. Residue Tyr144 is modified to Phosphotyrosine. The NR LBD domain occupies 147-377 (SSLPSINALL…NLLQEMLLGG (231 aa)). Thr166 carries the post-translational modification Phosphothreonine. At Ser167 the chain carries Phosphoserine. Glycyl lysine isopeptide (Lys-Gly) (interchain with G-Cter in ubiquitin) cross-links involve residues Lys234 and Lys307. Ser313 is subject to Phosphoserine; by AMPK. The 9aaTAD motif lies at 368–376 (NLLQEMLLG). Positions 419–447 (EWPRPRGQAATPETPQPSPPGGSGSEPYK) are disordered. 2 positions are modified to phosphothreonine: Thr429 and Thr432. Ser436 bears the Phosphoserine mark. N6-acetyllysine is present on Lys458.

This sequence belongs to the nuclear hormone receptor family. NR2 subfamily. In terms of assembly, homodimerization is required for HNF4-alpha to bind to its recognition site. Interacts with CLOCK, BMAL1, CRY1, CRY2, PER1 and PER2. Interacts with NR0B2/SHP; the resulting heterodimer is transcriptionally inactive. Interacts with DDX3X; this interaction disrupts the interaction between HNF4 and NR0B2 that forms inactive heterodimers and enhances the formation of active HNF4 homodimers. In terms of processing, phosphorylated on tyrosine residue(s); phosphorylation is important for its DNA-binding activity. Phosphorylation may directly or indirectly play a regulatory role in the subnuclear distribution. Phosphorylation at Ser-313 by AMPK reduces the ability to form homodimers and bind DNA. Acetylation at Lys-458 lowers transcriptional activation by about two-fold.

It is found in the nucleus. Transcriptional regulator which controls the expression of hepatic genes during the transition of endodermal cells to hepatic progenitor cells, facilitating the recruitment of RNA pol II to the promoters of target genes. Activates the transcription of CYP2C38. Represses the CLOCK-BMAL1 transcriptional activity and is essential for circadian rhythm maintenance and period regulation in the liver and colon cells. This is Hepatocyte nuclear factor 4-alpha (HNF4A) from Homo sapiens (Human).